We begin with the raw amino-acid sequence, 137 residues long: Large ribosomal subunit protein uL16 (137 aa).

It belongs to the universal ribosomal protein uL16 family. Part of the 50S ribosomal subunit.

Binds 23S rRNA and is also seen to make contacts with the A and possibly P site tRNAs. In Bartonella henselae (strain ATCC 49882 / DSM 28221 / CCUG 30454 / Houston 1) (Rochalimaea henselae), this protein is Large ribosomal subunit protein uL16.